Consider the following 133-residue polypeptide: Holo-[acyl-carrier-protein] synthase (133 aa).

Mg(2+) is bound by residues Asp-8 and Glu-57.

Belongs to the P-Pant transferase superfamily. AcpS family. Mg(2+) is required as a cofactor.

The protein resides in the cytoplasm. The catalysed reaction is apo-[ACP] + CoA = holo-[ACP] + adenosine 3',5'-bisphosphate + H(+). In terms of biological role, transfers the 4'-phosphopantetheine moiety from coenzyme A to a Ser of acyl-carrier-protein. In Chelativorans sp. (strain BNC1), this protein is Holo-[acyl-carrier-protein] synthase.